The primary structure comprises 359 residues: MIYNEKLYNSLLSMEEKFNDLNKELETEGLSVKRMSEINKSIKETTPIVEKFKEYKRTLNDIDSAEKLIKSEKDNEIIELAQLELSEKKPLIEKYEYELKVLLLPKDPNDDKNVIVEMRPAAGGDESSIFVGDLFSAYKRYADSLGWKVKMLEVQESSHGYGFISFMINGENVYSKMKFESGVHRVQRVPATESKGRVHTSTITVAVLPELEEVELVINNSDLKIDTYRASGAGGQHINKTESAVRITHIPTGIFVACQEGKSQIENRETAMKMLRAKLWEKKEEENRKNISDLRKGQVGTGERAEKIRTYNYPQNRVTDHRINLTLNKLDNVMLGNLSEIIDSLISHDEAVKMQEAKI.

Gln-236 bears the N5-methylglutamine mark.

Belongs to the prokaryotic/mitochondrial release factor family. Methylated by PrmC. Methylation increases the termination efficiency of RF1.

It is found in the cytoplasm. Functionally, peptide chain release factor 1 directs the termination of translation in response to the peptide chain termination codons UAG and UAA. This Malacoplasma penetrans (strain HF-2) (Mycoplasma penetrans) protein is Peptide chain release factor 1.